The primary structure comprises 160 residues: SsrA-binding protein (160 aa).

Belongs to the SmpB family.

The protein resides in the cytoplasm. In terms of biological role, required for rescue of stalled ribosomes mediated by trans-translation. Binds to transfer-messenger RNA (tmRNA), required for stable association of tmRNA with ribosomes. tmRNA and SmpB together mimic tRNA shape, replacing the anticodon stem-loop with SmpB. tmRNA is encoded by the ssrA gene; the 2 termini fold to resemble tRNA(Ala) and it encodes a 'tag peptide', a short internal open reading frame. During trans-translation Ala-aminoacylated tmRNA acts like a tRNA, entering the A-site of stalled ribosomes, displacing the stalled mRNA. The ribosome then switches to translate the ORF on the tmRNA; the nascent peptide is terminated with the 'tag peptide' encoded by the tmRNA and targeted for degradation. The ribosome is freed to recommence translation, which seems to be the essential function of trans-translation. This chain is SsrA-binding protein, found in Citrobacter koseri (strain ATCC BAA-895 / CDC 4225-83 / SGSC4696).